The primary structure comprises 316 residues: MAPENFTRVTEFILTGVSSCPELQIPLFLVFLVLYGLTMAGNLGIITLTSVDSRLQTPMYFFLQHLALINLGNSTVIAPKMLINFLVKKKTTSFYECATQLGGFLFFIVSEVIMLALMAYDRYVAICNPLLYMVVVSRRLCLLLVSLTYLYGFSTAIVVSSYVFSVSYCSSNIINHFYCDNVPLLALSCSDTYLPETVVFISAATNVVGSLIIVLVSYFNIVLSILKICSSEGRKKAFSTCASHMMAVTIFYGTLLFMYVQPRSNHSLDTDDKMASVFYTLVIPMLNPLIYSLRNKDVKTALQRFMTNLCYSFKTM.

Residues 1–25 lie on the Extracellular side of the membrane; that stretch reads MAPENFTRVTEFILTGVSSCPELQI. Asn5 carries N-linked (GlcNAc...) asparagine glycosylation. Residues 26 to 46 traverse the membrane as a helical segment; sequence PLFLVFLVLYGLTMAGNLGII. At 47 to 54 the chain is on the cytoplasmic side; the sequence is TLTSVDSR. The chain crosses the membrane as a helical span at residues 55–75; the sequence is LQTPMYFFLQHLALINLGNST. Topologically, residues 76 to 99 are extracellular; sequence VIAPKMLINFLVKKKTTSFYECAT. A disulfide bridge connects residues Cys97 and Cys189. The chain crosses the membrane as a helical span at residues 100–120; sequence QLGGFLFFIVSEVIMLALMAY. Over 121–139 the chain is Cytoplasmic; that stretch reads DRYVAICNPLLYMVVVSRR. Residues 140-160 form a helical membrane-spanning segment; sequence LCLLLVSLTYLYGFSTAIVVS. At 161–197 the chain is on the extracellular side; it reads SYVFSVSYCSSNIINHFYCDNVPLLALSCSDTYLPET. A helical transmembrane segment spans residues 198–217; that stretch reads VVFISAATNVVGSLIIVLVS. Over 218–237 the chain is Cytoplasmic; the sequence is YFNIVLSILKICSSEGRKKA. A helical membrane pass occupies residues 238–258; the sequence is FSTCASHMMAVTIFYGTLLFM. At 259 to 272 the chain is on the extracellular side; that stretch reads YVQPRSNHSLDTDD. Residues 273-293 traverse the membrane as a helical segment; that stretch reads KMASVFYTLVIPMLNPLIYSL. Over 294-316 the chain is Cytoplasmic; sequence RNKDVKTALQRFMTNLCYSFKTM.

It belongs to the G-protein coupled receptor 1 family.

The protein localises to the cell membrane. Odorant receptor. The sequence is that of Olfactory receptor 8J1 (OR8J1) from Homo sapiens (Human).